Consider the following 61-residue polypeptide: Large ribosomal subunit protein bL28 (61 aa).

A disordered region spans residues 1 to 26; that stretch reads MAKDYVTGKRTHFGNTRSHALNHSRR.

It belongs to the bacterial ribosomal protein bL28 family.

The protein is Large ribosomal subunit protein bL28 of Lactiplantibacillus plantarum (strain ATCC BAA-793 / NCIMB 8826 / WCFS1) (Lactobacillus plantarum).